The following is a 1379-amino-acid chain: DNA-directed RNA polymerase subunit beta (1379 aa).

Belongs to the RNA polymerase beta chain family. In terms of assembly, the RNAP catalytic core consists of 2 alpha, 1 beta, 1 beta' and 1 omega subunit. When a sigma factor is associated with the core the holoenzyme is formed, which can initiate transcription.

The catalysed reaction is RNA(n) + a ribonucleoside 5'-triphosphate = RNA(n+1) + diphosphate. DNA-dependent RNA polymerase catalyzes the transcription of DNA into RNA using the four ribonucleoside triphosphates as substrates. This is DNA-directed RNA polymerase subunit beta from Ruegeria sp. (strain TM1040) (Silicibacter sp.).